The chain runs to 305 residues: UDP-3-O-acyl-N-acetylglucosamine deacetylase (305 aa).

3 residues coordinate Zn(2+): H79, H238, and D242. H265 serves as the catalytic Proton donor.

Belongs to the LpxC family. Zn(2+) is required as a cofactor.

It catalyses the reaction a UDP-3-O-[(3R)-3-hydroxyacyl]-N-acetyl-alpha-D-glucosamine + H2O = a UDP-3-O-[(3R)-3-hydroxyacyl]-alpha-D-glucosamine + acetate. Its pathway is glycolipid biosynthesis; lipid IV(A) biosynthesis; lipid IV(A) from (3R)-3-hydroxytetradecanoyl-[acyl-carrier-protein] and UDP-N-acetyl-alpha-D-glucosamine: step 2/6. Catalyzes the hydrolysis of UDP-3-O-myristoyl-N-acetylglucosamine to form UDP-3-O-myristoylglucosamine and acetate, the committed step in lipid A biosynthesis. This chain is UDP-3-O-acyl-N-acetylglucosamine deacetylase, found in Salmonella typhi.